Here is an 892-residue protein sequence, read N- to C-terminus: Alpha-actinin-1 (892 aa).

M1 carries the post-translational modification N-acetylmethionine. Residues 1–247 (MDHYDSQQTN…IMTYVSSFYH (247 aa)) form an actin-binding region. S6 carries the phosphoserine modification. At Y12 the chain carries Phosphotyrosine; by FAK1. Calponin-homology (CH) domains lie at 31–135 (KQQR…LRFA) and 144–250 (TSAK…HAFS). 2 positions are modified to N6-acetyllysine: K95 and K195. Spectrin repeat units lie at residues 274–384 (QLME…WLLN), 394–499 (HLAE…ALER), 509–620 (QLYL…ALTE), and 630–733 (RLRK…EVEN). Residues 274 to 733 (QLMEDYEKLA…IARTINEVEN (460 aa)) are interaction with DDN. S471 is subject to Phosphoserine. N6-acetyllysine is present on K676. S677 carries the phosphoserine modification. EF-hand domains lie at 746 to 781 (EQMN…LGYD) and 787 to 822 (QGEA…ETAD). Positions 759, 761, 763, 765, and 770 each coordinate Ca(2+). Position 890 is a phosphoserine (S890).

The protein belongs to the alpha-actinin family. In terms of assembly, homodimer; antiparallel. Interacts with MYOZ2, TTID and LPP. Interacts with DDN. Interacts with PSD. Interacts with MICALL2. Interacts with DNM2 and CTTN. Interacts with PDLIM1. Interacts with PDLIM2. Interacts with PDLIM4 (via PDZ domain). Interacts with IGSF8.

Its subcellular location is the cytoplasm. The protein resides in the cytoskeleton. It is found in the myofibril. The protein localises to the sarcomere. It localises to the z line. Its subcellular location is the cell membrane. The protein resides in the cell junction. It is found in the cell projection. The protein localises to the ruffle. Functionally, F-actin cross-linking protein which is thought to anchor actin to a variety of intracellular structures. Association with IGSF8 regulates the immune synapse formation and is required for efficient T-cell activation. In Mus musculus (Mouse), this protein is Alpha-actinin-1 (Actn1).